Consider the following 360-residue polypeptide: CFA/I fimbrial subunit E (360 aa).

The protein resides in the fimbrium. This Escherichia coli protein is CFA/I fimbrial subunit E (cfaE).